The following is a 904-amino-acid chain: MTESTQLQTAENNNAGVVKMEPPPPATSSVSVSAAAAAHALSSLSSLTMAATGSALSPATPPPSLNLSHQQQQHQQHYALKWNDFQSSILSSFRHLRDEEDFVDVTLACDERSFTAHKVVLSACSPYFRRLLKANPCEHPIVILRDVRCDDVENLLSFMYNGEVNVSHEQLPDFLKTAHLLQIRGLADVNGGYPYSKALSAALSHNSSNNNNNNSSSNNSLSNNNNNNNNNAESSNHNKISSYLSPNQTSAACNNSSNSNSNNHSSSHNNSSSNNISGSLNSSLNSPFSAPQIPPPVTASSAAAAAAAAASLTAAVAAAAAATAASAGSSSSAASGQTSGTPAIQELKASSAASPVRNPNPNPSKASSSNHWDMGEMEGSRKSHLTPPPQKRIKSADLFRAQHGISPERLLLDREFPVAGQHPLTRNRSGRDTSKDRERNLELRESLLGQALENSNGQQANPKHELGQSAGEDSNSSDTEPSDRGDGQHDGTLDGIDNQRSHSFPNAFLGLQGIPGLLPGPSGINSDFVSRRSLEMRVRATDPRPCPKCGKIYRSAHTLRTHLEDKHTVCPGYRCVLCGTVAKSRNSLHSHMSRQHRGISTKDLPVLPMPSAFDPELASRLLAKAGVKISPAELRARASPTGGSGSSGGGGGGGSSQAKLDLSNASGGPMDDAEDSDDDPEDLTTGNGLYGMGGSSSDLSRYHESLLSNFGHARMRNEAAAVAATAAALGQPKDLGVQLPNSNAPGQSLLDTYLQFITENTFGMGMSQEQAAAAALRAKMAQLNAMGHSLDNLPPGLLPGQFDLSKLAAGNPAFGQSGPGLTIEPIMRHEQAAGNLSPNRPLALNSGGRMMGHDEMAENDGDMRREGSEPMDLGLDNNQSGSNHEVANSDAEENYSEDEGVHNT.

A compositionally biased stretch (polar residues) spans 1–15; the sequence is MTESTQLQTAENNNA. Disordered regions lie at residues 1-30 and 53-72; these read MTESTQLQTAENNNAGVVKMEPPPPATSSV and GSALSPATPPPSLNLSHQQQ. One can recognise a BTB domain in the interval 103–168; the sequence is VDVTLACDER…MYNGEVNVSH (66 aa). A compositionally biased stretch (low complexity) spans 204–238; it reads SHNSSNNNNNNSSSNNSLSNNNNNNNNNAESSNHN. Disordered stretches follow at residues 204-287, 349-390, 411-438, and 451-501; these read SHNS…LNSP, ASSA…PPPQ, LLDREFPVAGQHPLTRNRSGRDTSKDRE, and ALEN…NQRS. Over residues 239 to 253 the composition is skewed to polar residues; sequence KISSYLSPNQTSAAC. The segment covering 254 to 286 has biased composition (low complexity); the sequence is NNSSNSNSNNHSSSHNNSSSNNISGSLNSSLNS. Positions 429–438 are enriched in basic and acidic residues; it reads SGRDTSKDRE. A compositionally biased stretch (polar residues) spans 452-461; it reads LENSNGQQAN. Serine 474 is modified (phosphoserine). Basic and acidic residues predominate over residues 481-500; sequence PSDRGDGQHDGTLDGIDNQR. 2 consecutive C2H2-type zinc fingers follow at residues 544–567 and 573–596; these read RPCPKCGKIYRSAHTLRTHLEDKH and YRCVLCGTVAKSRNSLHSHMSRQH. 2 disordered regions span residues 633–696 and 832–904; these read ELRA…GGSS and AAGN…VHNT. Positions 642 to 655 are enriched in gly residues; it reads GGSGSSGGGGGGGS. Acidic residues predominate over residues 671–682; sequence DDAEDSDDDPED. A phosphoserine mark is found at serine 837, serine 846, and serine 868. Residues 851–868 are compositionally biased toward basic and acidic residues; that stretch reads MGHDEMAENDGDMRREGS. A compositionally biased stretch (polar residues) spans 876–886; that stretch reads DNNQSGSNHEV. A phosphoserine mark is found at serine 889 and serine 896.

As to expression, expressed in CNS midline cells during embryonic stages 9-13. Expression also seen in cells of the stomagastric nervous system. Segmentally repeated stripes of ectodermal expression appear at stage 11 that become uniform by stage 12 and throughout embryogenesis. Expressed at variable levels in somatic muscles from stage 16 and in all imaginal disks during larval development. Expression is seen in da neurons that grow in two-dimensional dendrites underneath the epidermis during late embryonic, larval, and pupal stages.

The protein resides in the nucleus. Expression is vital for development; may be involved in transcriptional regulation. In embryos, muscle specific expression is required for segmental nerve b (SNb) motoneuron target recognition within ventral longitudinal muscles. Has a role in establishing and maintaining embryonic muscle attachments, adult sensory cell formation (macrochaetae) and morphogenesis of adult appendages (legs, antenna aristae and male external genitalia). Has a role in the morphogenesis of the class I dendritic neurons: selective expression of ab in class I da neurons plays a pivotal role in forming dendritic arbors, which are characteristic of the class I cells. The development of more complex arbors of class II-IV neurons depends on the absence of ab. This is Protein abrupt (ab) from Drosophila melanogaster (Fruit fly).